The chain runs to 385 residues: Probable di-N-acetylchitobiase 2 (385 aa).

An N-terminal signal peptide occupies residues 1–15; it reads MRIILLLFLIVFVVA. One can recognise a GH18 domain in the interval 16-377; the sequence is QSSSSSSSSG…DALASFFPQS (362 aa). Residues Asn51 and Asn101 are each glycosylated (N-linked (GlcNAc...) asparagine). Glu129 acts as the Proton donor in catalysis. 3 N-linked (GlcNAc...) asparagine glycosylation sites follow: Asn223, Asn272, and Asn296.

It belongs to the glycosyl hydrolase 18 family.

The protein resides in the lysosome. Involved in the degradation of asparagine-linked glycoproteins. May hydrolyze of N-acetyl-beta-D-glucosamine (1-4)N-acetylglucosamine chitobiose core from the reducing end of the bond. The chain is Probable di-N-acetylchitobiase 2 (ctbs2) from Dictyostelium discoideum (Social amoeba).